Here is a 123-residue protein sequence, read N- to C-terminus: Small ribosomal subunit protein uS13 (123 aa).

The tract at residues 95-123 (GLPVRGQKTKTNARTRKGPKKAVASKKKK) is disordered.

The protein belongs to the universal ribosomal protein uS13 family. In terms of assembly, part of the 30S ribosomal subunit. Forms a loose heterodimer with protein S19. Forms two bridges to the 50S subunit in the 70S ribosome.

Functionally, located at the top of the head of the 30S subunit, it contacts several helices of the 16S rRNA. In the 70S ribosome it contacts the 23S rRNA (bridge B1a) and protein L5 of the 50S subunit (bridge B1b), connecting the 2 subunits; these bridges are implicated in subunit movement. Contacts the tRNAs in the A and P-sites. The sequence is that of Small ribosomal subunit protein uS13 from Clostridium acetobutylicum (strain ATCC 824 / DSM 792 / JCM 1419 / IAM 19013 / LMG 5710 / NBRC 13948 / NRRL B-527 / VKM B-1787 / 2291 / W).